Consider the following 506-residue polypeptide: UBX domain-containing protein 4 (506 aa).

Residues 1–199 (MLWFQGAIPA…PAEDLTVRVE (199 aa)) are interaction with UBQLN1. At 1–411 (MLWFQGAIPA…VPSSSGDIWT (411 aa)) the chain is on the cytoplasmic side. Polar residues-rich tracts occupy residues 114–136 (SLKG…TPSA) and 177–189 (SLSQ…SNQR). The segment at 114-193 (SLKGETSVTN…GCSNQRPAED (80 aa)) is disordered. The 79-residue stretch at 313–391 (DRSTIARIQF…ELAPSASVVL (79 aa)) folds into the UBX domain. The stretch at 412 to 432 (LLGTVLYPFLAIWRLISNFLF) is an intramembrane region. Residues 433 to 506 (SNPPPAQTSA…TWNGNSTQQM (74 aa)) lie on the Cytoplasmic side of the membrane. The disordered stretch occupies residues 437–506 (PAQTSARATS…TWNGNSTQQM (70 aa)). Over residues 444 to 456 (ATSTEPSNSASSS) the composition is skewed to low complexity. Positions 457–489 (KSEKREPVRKRVLEKRGEDFKKEGKIYRLRTQD) are enriched in basic and acidic residues. The residue at position 487 (threonine 487) is a Phosphothreonine. A compositionally biased stretch (polar residues) spans 496–506 (NTWNGNSTQQM).

In terms of assembly, directly interacts with VCP. Interacts with UBQLN1. Forms a complex with VCP and UBQLN1.

It is found in the endoplasmic reticulum membrane. The protein resides in the nucleus envelope. Functionally, involved in endoplasmic reticulum-associated protein degradation (ERAD). Acts as a platform to recruit both UBQLN1 and VCP to the ER during ERAD. This Rattus norvegicus (Rat) protein is UBX domain-containing protein 4 (Ubxn4).